The sequence spans 185 residues: Ribosome-recycling factor (185 aa).

The protein belongs to the RRF family.

The protein resides in the cytoplasm. Functionally, responsible for the release of ribosomes from messenger RNA at the termination of protein biosynthesis. May increase the efficiency of translation by recycling ribosomes from one round of translation to another. This chain is Ribosome-recycling factor, found in Buchnera aphidicola subsp. Schizaphis graminum (strain Sg).